A 405-amino-acid polypeptide reads, in one-letter code: Transcriptional regulatory protein DEP1 (405 aa).

Over residues 1–12 (MSQQTPQESEQT) the composition is skewed to low complexity. Disordered stretches follow at residues 1–26 (MSQQ…SVLS) and 49–171 (AGTE…VMPS). S56 carries the phosphoserine modification. 2 stretches are compositionally biased toward basic and acidic residues: residues 86 to 108 (SLKR…KVPG) and 116 to 139 (EEEK…ARDE). Residue S120 is modified to Phosphoserine. Positions 140–157 (QGDEGDNEEENNEEDNEN) are enriched in acidic residues. Position 370 is a phosphoserine (S370).

As to quaternary structure, component of the RPD3C(L) complex composed of at least ASH1, CTI6, DEP1, PHO23, RPD3, RXT2, RXT3, SAP30, SDS3, SIN3, UME1 and UME6.

Its subcellular location is the cytoplasm. It localises to the nucleus. Component of the RPD3C(L) histone deacetylase complex (HDAC) responsible for the deacetylation of lysine residues on the N-terminal part of the core histones (H2A, H2B, H3 and H4). Histone deacetylation gives a tag for epigenetic repression and plays an important role in transcriptional regulation, cell cycle progression and developmental events. The polypeptide is Transcriptional regulatory protein DEP1 (DEP1) (Saccharomyces cerevisiae (strain ATCC 204508 / S288c) (Baker's yeast)).